Here is a 198-residue protein sequence, read N- to C-terminus: Holliday junction branch migration complex subunit RuvA (198 aa).

Residues 1-63 (MIALLTGQIA…EDAIQLYGFR (63 aa)) are domain I. A domain II region spans residues 64–142 (TSLEKSFFQL…KLDLSSVVVP (79 aa)). The interval 143–153 (EPRQMPEDDLL) is flexible linker. Positions 153–198 (LEDVVSALLNLGYKEPQVRKVLAGLNPGSDASLEGVLKQALKSLMR) are domain III.

This sequence belongs to the RuvA family. As to quaternary structure, homotetramer. Forms an RuvA(8)-RuvB(12)-Holliday junction (HJ) complex. HJ DNA is sandwiched between 2 RuvA tetramers; dsDNA enters through RuvA and exits via RuvB. An RuvB hexamer assembles on each DNA strand where it exits the tetramer. Each RuvB hexamer is contacted by two RuvA subunits (via domain III) on 2 adjacent RuvB subunits; this complex drives branch migration. In the full resolvosome a probable DNA-RuvA(4)-RuvB(12)-RuvC(2) complex forms which resolves the HJ.

Its subcellular location is the cytoplasm. Its function is as follows. The RuvA-RuvB-RuvC complex processes Holliday junction (HJ) DNA during genetic recombination and DNA repair, while the RuvA-RuvB complex plays an important role in the rescue of blocked DNA replication forks via replication fork reversal (RFR). RuvA specifically binds to HJ cruciform DNA, conferring on it an open structure. The RuvB hexamer acts as an ATP-dependent pump, pulling dsDNA into and through the RuvAB complex. HJ branch migration allows RuvC to scan DNA until it finds its consensus sequence, where it cleaves and resolves the cruciform DNA. This Pelobacter propionicus (strain DSM 2379 / NBRC 103807 / OttBd1) protein is Holliday junction branch migration complex subunit RuvA.